Here is a 216-residue protein sequence, read N- to C-terminus: MOB kinase activator-like 1 homolog C (216 aa).

Zn(2+) is bound by residues C78, C83, H160, and H165.

This sequence belongs to the MOB1/phocein family.

In Dictyostelium discoideum (Social amoeba), this protein is MOB kinase activator-like 1 homolog C (mobC).